The sequence spans 125 residues: Protein ApaG (125 aa).

Residues 1–125 form the ApaG domain; that stretch reads MINAPRVCVQ…FRLAIPSLIH (125 aa).

This is Protein ApaG from Pectobacterium atrosepticum (strain SCRI 1043 / ATCC BAA-672) (Erwinia carotovora subsp. atroseptica).